The sequence spans 302 residues: m7GpppN-mRNA hydrolase NUDT17 (302 aa).

Positions 89-237 constitute a Nudix hydrolase domain; sequence GRGVDLGVAV…DGTETPKHLP (149 aa). A Nudix box motif is present at residues 128 to 149; it reads GHVEPDEELLDGGLRELWEESG. Residues Glu-143 and Glu-147 each contribute to the Mg(2+) site.

The protein belongs to the Nudix hydrolase family. Requires Mg(2+) as cofactor. Mn(2+) is required as a cofactor.

It carries out the reaction a 5'-end (N(7)-methyl 5'-triphosphoguanosine)-ribonucleoside in mRNA + H2O = N(7)-methyl-GDP + a 5'-end phospho-ribonucleoside in mRNA + 2 H(+). Acts as a decapping enzyme capable of hydrolyzing monomethylated capped RNAs (in vitro). Hydrolyzes monomethylated capped RNA after alpha and beta phosphates to form N(7)-methyl-GDP. Shows low activity towards unmethylated capped RNA. This chain is m7GpppN-mRNA hydrolase NUDT17 (NUDT17), found in Bos taurus (Bovine).